Consider the following 247-residue polypeptide: LHFPL tetraspan subfamily member 4 protein (247 aa).

4 helical membrane passes run 22–42, 97–117, 127–147, and 178–198; these read IGVL…VVFI, FFVL…ALFF, ICAW…MIFP, and ILAI…FVLG.

The protein belongs to the LHFP family. Interacts with GABA(A) receptor subunits. Interacts with GABRB3. Interacts with GABRA2. Interacts with GABRG2. Interacts with GABRA1. Identified in a complex of 720 kDa composed of LHFPL4, NLGN2, GABRA1, GABRB2, GABRG2 and GABRB3. Interacts with NLGN2; leading to mutual regulation of protein level and synaptic clustering. Highly expressed in the brain, including the cortex, hippocampus, midbrain, olfactory bulb pona plus medulla (at protein level). Expressed in the in the cerebellar granular layer and in granular layer. Colocalized with GPHN at inhibitory synapses. Weakly expressed in heart, testis, lung, intestine, vagina, ovary and uterus.

It localises to the cell projection. The protein resides in the dendrite. It is found in the postsynaptic cell membrane. In terms of biological role, plays a role in the regulation of inhibitory synapse formation and function by being involved in maintening gamma-aminobutyric acid receptors (GABAARs) clustering and their associated scaffold proteins at inhibitory synaptic sites. Acts in concert with NLGN2 to recruit or stabilize GABAARs. In Mus musculus (Mouse), this protein is LHFPL tetraspan subfamily member 4 protein.